Consider the following 889-residue polypeptide: Translation initiation factor IF-2 (889 aa).

The interval 158 to 296 (LKEKQEKRRQ…KYKSDELQSQ (139 aa)) is disordered. The segment covering 209 to 228 (AAATPATSTAPATTSTTAAT) has biased composition (low complexity). Residues 238–270 (VKPEEKGEKKKKPTKQDAWKDEPVKRREPKARG) show a composition bias toward basic and acidic residues. A tr-type G domain is found at 391 to 560 (PRAPVVTVMG…LLQAEVLELK (170 aa)). The G1 stretch occupies residues 400-407 (GHVDHGKT). 400-407 (GHVDHGKT) is a GTP binding site. A G2 region spans residues 425–429 (GITQH). The tract at residues 446–449 (DTPG) is G3. Residues 446–450 (DTPGH) and 500–503 (NKMD) contribute to the GTP site. A G4 region spans residues 500–503 (NKMD). The tract at residues 536–538 (SAK) is G5.

The protein belongs to the TRAFAC class translation factor GTPase superfamily. Classic translation factor GTPase family. IF-2 subfamily.

The protein localises to the cytoplasm. Its function is as follows. One of the essential components for the initiation of protein synthesis. Protects formylmethionyl-tRNA from spontaneous hydrolysis and promotes its binding to the 30S ribosomal subunits. Also involved in the hydrolysis of GTP during the formation of the 70S ribosomal complex. This chain is Translation initiation factor IF-2, found in Nitrosomonas europaea (strain ATCC 19718 / CIP 103999 / KCTC 2705 / NBRC 14298).